A 358-amino-acid polypeptide reads, in one-letter code: Protein RecA (358 aa).

67–74 (GPESSGKT) is a binding site for ATP.

Belongs to the RecA family.

It is found in the cytoplasm. Its function is as follows. Can catalyze the hydrolysis of ATP in the presence of single-stranded DNA, the ATP-dependent uptake of single-stranded DNA by duplex DNA, and the ATP-dependent hybridization of homologous single-stranded DNAs. It interacts with LexA causing its activation and leading to its autocatalytic cleavage. The protein is Protein RecA of Xenorhabdus nematophila (strain ATCC 19061 / DSM 3370 / CCUG 14189 / LMG 1036 / NCIMB 9965 / AN6).